Reading from the N-terminus, the 118-residue chain is Small ribosomal subunit protein uS13 (118 aa).

A disordered region spans residues 94–118 (SLPLRGQRTKTNARTRKGPRKPIRK).

It belongs to the universal ribosomal protein uS13 family. In terms of assembly, part of the 30S ribosomal subunit. Forms a loose heterodimer with protein S19. Forms two bridges to the 50S subunit in the 70S ribosome.

In terms of biological role, located at the top of the head of the 30S subunit, it contacts several helices of the 16S rRNA. In the 70S ribosome it contacts the 23S rRNA (bridge B1a) and protein L5 of the 50S subunit (bridge B1b), connecting the 2 subunits; these bridges are implicated in subunit movement. Contacts the tRNAs in the A and P-sites. This chain is Small ribosomal subunit protein uS13, found in Shewanella denitrificans (strain OS217 / ATCC BAA-1090 / DSM 15013).